Consider the following 151-residue polypeptide: 3-hydroxyacyl-[acyl-carrier-protein] dehydratase FabZ (151 aa).

The active site involves His-54.

Belongs to the thioester dehydratase family. FabZ subfamily.

It localises to the cytoplasm. It carries out the reaction a (3R)-hydroxyacyl-[ACP] = a (2E)-enoyl-[ACP] + H2O. In terms of biological role, involved in unsaturated fatty acids biosynthesis. Catalyzes the dehydration of short chain beta-hydroxyacyl-ACPs and long chain saturated and unsaturated beta-hydroxyacyl-ACPs. This is 3-hydroxyacyl-[acyl-carrier-protein] dehydratase FabZ from Blochmanniella floridana.